The primary structure comprises 193 residues: Protein Syd (193 aa).

The protein belongs to the Syd family.

It is found in the cell inner membrane. Interacts with the SecY protein in vivo. May bind preferentially to an uncomplexed state of SecY, thus functioning either as a chelating agent for excess SecY in the cell or as a regulatory factor that negatively controls the translocase function. The chain is Protein Syd from Tolumonas auensis (strain DSM 9187 / NBRC 110442 / TA 4).